Reading from the N-terminus, the 269-residue chain is Hydroxyethylthiazole kinase (269 aa).

Residue Met45 coordinates substrate. ATP is bound by residues Arg121 and Thr167. Gly194 contributes to the substrate binding site.

The protein belongs to the Thz kinase family. Requires Mg(2+) as cofactor.

It carries out the reaction 5-(2-hydroxyethyl)-4-methylthiazole + ATP = 4-methyl-5-(2-phosphooxyethyl)-thiazole + ADP + H(+). It participates in cofactor biosynthesis; thiamine diphosphate biosynthesis; 4-methyl-5-(2-phosphoethyl)-thiazole from 5-(2-hydroxyethyl)-4-methylthiazole: step 1/1. Catalyzes the phosphorylation of the hydroxyl group of 4-methyl-5-beta-hydroxyethylthiazole (THZ). In Bacillus cytotoxicus (strain DSM 22905 / CIP 110041 / 391-98 / NVH 391-98), this protein is Hydroxyethylthiazole kinase.